The chain runs to 309 residues: Probable manganese-dependent inorganic pyrophosphatase (309 aa).

Residues His-9, Asp-13, Asp-15, Asp-75, His-97, and Asp-149 each contribute to the Mn(2+) site.

It belongs to the PPase class C family. Mn(2+) is required as a cofactor.

The protein localises to the cytoplasm. It carries out the reaction diphosphate + H2O = 2 phosphate + H(+). The polypeptide is Probable manganese-dependent inorganic pyrophosphatase (Bacillus licheniformis (strain ATCC 14580 / DSM 13 / JCM 2505 / CCUG 7422 / NBRC 12200 / NCIMB 9375 / NCTC 10341 / NRRL NRS-1264 / Gibson 46)).